The chain runs to 591 residues: Probable translation initiation factor IF-2 (591 aa).

In terms of domain architecture, tr-type G spans 7 to 223 (LRTPIVCVMG…LLGLAQKFLE (217 aa)). The G1 stretch occupies residues 16–23 (GHVDHGKT). 16–23 (GHVDHGKT) is a binding site for GTP. Positions 41–45 (AITQH) are G2. A G3 region spans residues 78–81 (DTPG). GTP contacts are provided by residues 78 to 82 (DTPGH) and 132 to 135 (NKID). A G4 region spans residues 132–135 (NKID). Residues 200–202 (SAM) form a G5 region.

It belongs to the TRAFAC class translation factor GTPase superfamily. Classic translation factor GTPase family. IF-2 subfamily.

Function in general translation initiation by promoting the binding of the formylmethionine-tRNA to ribosomes. Seems to function along with eIF-2. This is Probable translation initiation factor IF-2 from Methanosarcina barkeri (strain Fusaro / DSM 804).